We begin with the raw amino-acid sequence, 213 residues long: Transcription antitermination protein NusB (213 aa).

The protein belongs to the NusB family.

Involved in transcription antitermination. Required for transcription of ribosomal RNA (rRNA) genes. Binds specifically to the boxA antiterminator sequence of the ribosomal RNA (rrn) operons. This chain is Transcription antitermination protein NusB, found in Nostoc punctiforme (strain ATCC 29133 / PCC 73102).